A 142-amino-acid chain; its full sequence is Large ribosomal subunit protein uL11 (142 aa).

The protein belongs to the universal ribosomal protein uL11 family. As to quaternary structure, part of the ribosomal stalk of the 50S ribosomal subunit. Interacts with L10 and the large rRNA to form the base of the stalk. L10 forms an elongated spine to which L12 dimers bind in a sequential fashion forming a multimeric L10(L12)X complex. In terms of processing, one or more lysine residues are methylated.

Its function is as follows. Forms part of the ribosomal stalk which helps the ribosome interact with GTP-bound translation factors. This is Large ribosomal subunit protein uL11 from Proteus vulgaris.